Reading from the N-terminus, the 539-residue chain is Putative serine/threonine-protein kinase L670 (539 aa).

The 115-residue stretch at 1–115 folds into the Cyclin N-terminal domain; sequence MSLFNNHPEL…ILKVFKFGLH (115 aa). The region spanning 258–519 is the Protein kinase domain; it reads MNVIEKLGIG…VLKIFSECFV (262 aa). ATP contacts are provided by residues 264-272 and Lys-285; that span reads LGIGSFGLV. Asp-375 serves as the catalytic Proton acceptor.

It belongs to the protein kinase superfamily. Ser/Thr protein kinase family.

The catalysed reaction is L-seryl-[protein] + ATP = O-phospho-L-seryl-[protein] + ADP + H(+). The enzyme catalyses L-threonyl-[protein] + ATP = O-phospho-L-threonyl-[protein] + ADP + H(+). This Acanthamoeba polyphaga mimivirus (APMV) protein is Putative serine/threonine-protein kinase L670.